The primary structure comprises 73 residues: UPF0435 protein lmo1707 (73 aa).

Belongs to the UPF0435 family.

The polypeptide is UPF0435 protein lmo1707 (Listeria monocytogenes serovar 1/2a (strain ATCC BAA-679 / EGD-e)).